The primary structure comprises 147 residues: Cyclic di-AMP receptor B (147 aa).

Residues M18–F78 enclose the CBS domain. 3',3'-c-di-AMP is bound by residues K23, A25, T46, A47, and R131.

As to quaternary structure, homodimer. Forms a homodimer with a parallel, head-to-head assembly of the monomers. Under conditions of potassium starvation and corresponding low c-di-AMP levels, apo-DarB specifically interacts with the N-terminal region of the RelA. Under the same conditions, apo-DarB also specifically interacts with the C-terminal part of the pyruvate carboxylase.

Binds c-di-AMP. Binding of c-di-AMP to DarB inhibits the interaction with RelA and PYC. In terms of biological role, involved in the c-di-AMP-dependent regulation of the bacterial stringent response. Modulates the activities of at least two enzymes under conditions of potassium limitation. Apo-DarB regulates the activity of the GTP pyrophosphokinase RelA by interacting directly with RelA, leading to stimulation of (p)ppGpp synthesis and induction of the stringent response. Apo-DarB also regulates pyruvate carboxylase (PYC) at two levels: directly at the protein level by binding to the enzyme and stimulating the synthesis of oxaloacetate and indirectly, by interaction with RelA, which leads to activation of the stringent response and to the increased expression of the pycA gene. Stimulation of these enzymes by DarB is prevented in the presence of cyclic di-AMP (c-di-AMP). This is Cyclic di-AMP receptor B from Bacillus subtilis (strain 168).